The chain runs to 163 residues: Succinate dehydrogenase assembly factor 2, mitochondrial (163 aa).

The protein belongs to the SDHAF2 family. Interacts with the flavoprotein subunit within the SDH catalytic dimer.

It is found in the mitochondrion matrix. Its function is as follows. Plays an essential role in the assembly of succinate dehydrogenase (SDH), an enzyme complex (also referred to as respiratory complex II) that is a component of both the tricarboxylic acid (TCA) cycle and the mitochondrial electron transport chain, and which couples the oxidation of succinate to fumarate with the reduction of ubiquinone (coenzyme Q) to ubiquinol. Required for flavinylation (covalent attachment of FAD) of the flavoprotein subunit of the SDH catalytic dimer. The polypeptide is Succinate dehydrogenase assembly factor 2, mitochondrial (Kluyveromyces lactis (strain ATCC 8585 / CBS 2359 / DSM 70799 / NBRC 1267 / NRRL Y-1140 / WM37) (Yeast)).